A 515-amino-acid chain; its full sequence is Histidine ammonia-lyase (515 aa).

The segment at residues 142–144 (ASG) is a cross-link (5-imidazolinone (Ala-Gly)). Ser143 bears the 2,3-didehydroalanine (Ser) mark.

It belongs to the PAL/histidase family. In terms of processing, contains an active site 4-methylidene-imidazol-5-one (MIO), which is formed autocatalytically by cyclization and dehydration of residues Ala-Ser-Gly.

Its subcellular location is the cytoplasm. The catalysed reaction is L-histidine = trans-urocanate + NH4(+). It participates in amino-acid degradation; L-histidine degradation into L-glutamate; N-formimidoyl-L-glutamate from L-histidine: step 1/3. This is Histidine ammonia-lyase from Methylobacterium nodulans (strain LMG 21967 / CNCM I-2342 / ORS 2060).